We begin with the raw amino-acid sequence, 121 residues long: ATP synthase epsilon chain (121 aa).

This sequence belongs to the ATPase epsilon chain family. In terms of assembly, F-type ATPases have 2 components, CF(1) - the catalytic core - and CF(0) - the membrane proton channel. CF(1) has five subunits: alpha(3), beta(3), gamma(1), delta(1), epsilon(1). CF(0) has three main subunits: a, b and c.

It is found in the cell membrane. Its function is as follows. Produces ATP from ADP in the presence of a proton gradient across the membrane. This Mycobacterium bovis (strain ATCC BAA-935 / AF2122/97) protein is ATP synthase epsilon chain (atpC).